The following is a 532-amino-acid chain: Flavin-containing monooxygenase 1 (532 aa).

Alanine 2 bears the N-acetylalanine mark. The Lumenal segment spans residues 2-510; it reads AKRVAIVGAG…TRIVQESPTP (509 aa). Residues 9 to 13, glutamate 32, 40 to 41, and 61 to 62 contribute to the FAD site; these read GAGVS, LW, and NS. NADP(+)-binding positions include 60–61 and 195–198; these read SN and SGTD. Residues 511–531 form a helical membrane-spanning segment; that stretch reads FASLLKLLSLLALLMAIFLIF. Leucine 532 is a topological domain (cytoplasmic).

The protein belongs to the FMO family. The cofactor is FAD. As to expression, liver.

The protein localises to the endoplasmic reticulum membrane. The enzyme catalyses hypotaurine + NADPH + O2 + H(+) = taurine + NADP(+) + H2O. It carries out the reaction hypotaurine + NADH + O2 + H(+) = taurine + NAD(+) + H2O. The catalysed reaction is trimethylamine + NADPH + O2 = trimethylamine N-oxide + NADP(+) + H2O. It catalyses the reaction N,N-dimethylaniline + NADPH + O2 + H(+) = N,N-dimethylaniline N-oxide + NADP(+) + H2O. Broad spectrum monooxygenase that catalyzes the oxygenation of a wide variety of nitrogen- and sulfur-containing compounds including xenobiotics. Catalyzes the S-oxygenation of hypotaurine to produce taurine, an organic osmolyte involved in cell volume regulation as well as a variety of cytoprotective and developmental processes. In vitro, catalyzes the N-oxygenation of trimethylamine (TMA) to produce trimethylamine N-oxide (TMAO) and could therefore participate to the detoxification of this compound that is generated by the action of gut microbiota from dietary precursors such as choline, choline containing compounds, betaine or L-carnitine. In Canis lupus familiaris (Dog), this protein is Flavin-containing monooxygenase 1 (FMO1).